The following is a 202-amino-acid chain: uncharacterized protein (202 aa).

A helical membrane pass occupies residues 10-30 (TAAIFLLCCTSVIILFTIAVV).

Belongs to the bacterial sugar transferase family.

The protein localises to the cell membrane. Functionally, may be involved in the production of the exopolysaccharide (EPS) component of the extracellular matrix during biofilm formation. EPS is responsible for the adhesion of chains of cells into bundles. This is an uncharacterized protein from Bacillus subtilis (strain 168).